The chain runs to 516 residues: Nucleolar complex protein 4 homolog (516 aa).

3 helical membrane-spanning segments follow: residues 296-316 (SACDVGGAISLLALNGLFILI), 347-367 (FFHLADLFLSSSHLPAYLVAA), and 375-395 (LALTAPPEALLMVLPLICNLL).

The protein belongs to the CBF/MAK21 family.

The protein resides in the nucleus membrane. Its subcellular location is the nucleus. It is found in the nucleolus. The polypeptide is Nucleolar complex protein 4 homolog (Noc4l) (Rattus norvegicus (Rat)).